The following is a 196-amino-acid chain: uncharacterized protein (196 aa).

Residues 44–46 (TTA), glycine 80, valine 100, and 107–109 (PSL) each bind S-adenosyl-L-methionine.

The protein belongs to the class IV-like SAM-binding methyltransferase superfamily. RNA methyltransferase TrmH family.

This is an uncharacterized protein from Serratia marcescens.